The chain runs to 80 residues: Putative membrane protein insertion efficiency factor (80 aa).

The segment at 61-80 (KTGKDPVPDHFSLKRNQEGE) is disordered. The segment covering 62–80 (TGKDPVPDHFSLKRNQEGE) has biased composition (basic and acidic residues).

The protein belongs to the UPF0161 family.

The protein localises to the cell membrane. Functionally, could be involved in insertion of integral membrane proteins into the membrane. This Streptococcus pneumoniae (strain 70585) protein is Putative membrane protein insertion efficiency factor.